A 350-amino-acid polypeptide reads, in one-letter code: Ion-translocating oxidoreductase complex subunit D (350 aa).

A run of 4 helical transmembrane segments spans residues 37-57 (YYFGYGTLVQLLLAITVAYLA), 78-109 (ALVTASLLAVAIPPLAPWWLIVIGTLFAIVIV), 124-144 (AMAAYVLLLISFPVQMTSWVA), and 158-178 (TFNSIFQLNAGYAADFFHLAI). Thr-185 carries the post-translational modification FMN phosphoryl threonine. Helical transmembrane passes span 212 to 232 (SVGEGWFWVNMAYLVGGLVML), 239 to 259 (WHISGAIVLTLFVCASIGFLI), 264 to 284 (FVSPIMHLFSGGTMLAAFFIA), 298 to 318 (LIFGAMIGLLIYLIRTFGGYP), and 319 to 339 (DAVAFAVLLANMCAPFIDYYV).

It belongs to the NqrB/RnfD family. In terms of assembly, the complex is composed of six subunits: RnfA, RnfB, RnfC, RnfD, RnfE and RnfG. Requires FMN as cofactor.

It localises to the cell inner membrane. Part of a membrane-bound complex that couples electron transfer with translocation of ions across the membrane. This Shewanella frigidimarina (strain NCIMB 400) protein is Ion-translocating oxidoreductase complex subunit D.